A 209-amino-acid polypeptide reads, in one-letter code: uncharacterized protein (209 aa).

An N-terminal signal peptide occupies residues 1–17 (MKRLVTGLLALSLFLAA). The interval 17 to 105 (ACGQDSDQQK…SNNQANNNQK (89 aa)) is disordered. Cys18 is lipidated: N-palmitoyl cysteine. A lipid anchor (S-diacylglycerol cysteine) is attached at Cys18. Over residues 23-70 (DQQKDSNKEKDDKAKTEQQDEKTNDSSKDKKDKKDDSKDVNKDNKDNS) the composition is skewed to basic and acidic residues. Positions 71-105 (ANDNQQQSNSNATNNDQNQTNNNQSSNNQANNNQK) are enriched in low complexity.

Its subcellular location is the cell membrane. This is an uncharacterized protein from Staphylococcus aureus (strain bovine RF122 / ET3-1).